The chain runs to 427 residues: Lactadherin (427 aa).

A signal peptide spans 1 to 22; that stretch reads MQFSRVLAALCGVLLCASGLFA. 2 consecutive EGF-like domains span residues 24-61 and 64-108; these read SGDF…LVCN and EKGP…IHCE. 3 disulfides stabilise this stretch: Cys-28–Cys-39, Cys-33–Cys-49, and Cys-51–Cys-60. N-linked (GlcNAc...) asparagine glycosylation occurs at Asn-61. 6 cysteine pairs are disulfide-bonded: Cys-68-Cys-79, Cys-73-Cys-96, Cys-98-Cys-107, Cys-111-Cys-267, Cys-254-Cys-258, and Cys-272-Cys-427. A Cell attachment site motif is present at residues 87 to 89; that stretch reads RGD. 2 consecutive F5/8 type C domains span residues 111–267 and 272–427; these read CSTK…LLGC and CSEP…LLGC. Asn-230 is a glycosylation site (N-linked (GlcNAc...) asparagine). N-linked (GlcNAc...) asparagine glycosylation is found at Asn-280 and Asn-390.

Spleen, lung, heart, brain and muscle.

The protein localises to the membrane. Its subcellular location is the secreted. It is found in the cytoplasmic vesicle. The protein resides in the secretory vesicle. It localises to the acrosome membrane. Contributes to phagocytic removal of apoptotic cells in many tissues. Plays an important role in the maintenance of intestinal epithelial homeostasis and the promotion of mucosal healing. Promotes VEGF-dependent neovascularization. Specific ligand for the alpha-v/beta-3 and alpha-v/beta-5 receptors. Also binds to phosphatidylserine-enriched cell surfaces in a receptor-independent manner. Zona pellucida-binding protein which may play a role in gamete interaction. Appears to participate in the O-acetylation of GD3 ganglioside sialic acid. The polypeptide is Lactadherin (Mfge8) (Rattus norvegicus (Rat)).